Reading from the N-terminus, the 550-residue chain is Chaperonin GroEL (550 aa).

Residues 30-33 (TLGP), K51, 87-91 (DGTTT), G415, and D496 contribute to the ATP site. Residues 526–550 (PEDEKMPPMPPGGGMGGMGGMGGMY) form a disordered region. A compositionally biased stretch (gly residues) spans 537 to 550 (GGGMGGMGGMGGMY).

The protein belongs to the chaperonin (HSP60) family. As to quaternary structure, forms a cylinder of 14 subunits composed of two heptameric rings stacked back-to-back. Interacts with the co-chaperonin GroES.

Its subcellular location is the cytoplasm. The enzyme catalyses ATP + H2O + a folded polypeptide = ADP + phosphate + an unfolded polypeptide.. Together with its co-chaperonin GroES, plays an essential role in assisting protein folding. The GroEL-GroES system forms a nano-cage that allows encapsulation of the non-native substrate proteins and provides a physical environment optimized to promote and accelerate protein folding. This chain is Chaperonin GroEL, found in Chloroherpeton thalassium (strain ATCC 35110 / GB-78).